We begin with the raw amino-acid sequence, 71 residues long: Prokaryotic ubiquitin-like protein Pup (71 aa).

The span at 1 to 18 (MATRDSGGQSQTGRSQQG) shows a compositional bias: low complexity. Residues 1–42 (MATRDSGGQSQTGRSQQGEEIEDVTTEASPEVAERHAEITED) form a disordered region. Residues 27 to 65 (EASPEVAERHAEITEDVDDLLDEIDSVLEENAEEFVRGY) form an ARC ATPase binding region. Residues 31–60 (EVAERHAEITEDVDDLLDEIDSVLEENAEE) adopt a coiled-coil conformation. Glutamate 71 is covalently cross-linked (Isoglutamyl lysine isopeptide (Glu-Lys) (interchain with K-? in acceptor proteins)).

Belongs to the prokaryotic ubiquitin-like protein family. In terms of assembly, strongly interacts with the proteasome-associated ATPase ARC through a hydrophobic interface; the interacting region of Pup lies in its C-terminal half. There is one Pup binding site per ARC hexamer ring.

It functions in the pathway protein degradation; proteasomal Pup-dependent pathway. Its function is as follows. Protein modifier that is covalently attached to lysine residues of substrate proteins, thereby targeting them for proteasomal degradation. The tagging system is termed pupylation. In Salinispora arenicola (strain CNS-205), this protein is Prokaryotic ubiquitin-like protein Pup.